We begin with the raw amino-acid sequence, 115 residues long: T-cell receptor gamma chain V region V108B (115 aa).

A signal peptide spans 1–18; the sequence is MLLLRWPTFCCLWVFGLG. Positions 19-115 are v segment; sequence QLEQTELSVT…EATYYCAVWI (97 aa).

The chain is T-cell receptor gamma chain V region V108B (Tcrg-V1) from Mus musculus (Mouse).